Reading from the N-terminus, the 136-residue chain is Urease subunit beta (136 aa).

The tract at residues 113 to 136 (NDEYAGVFGDNGAENVNKKGRKRS) is disordered.

This sequence belongs to the urease beta subunit family. In terms of assembly, heterotrimer of UreA (gamma), UreB (beta) and UreC (alpha) subunits. Three heterotrimers associate to form the active enzyme.

The protein localises to the cytoplasm. The catalysed reaction is urea + 2 H2O + H(+) = hydrogencarbonate + 2 NH4(+). It participates in nitrogen metabolism; urea degradation; CO(2) and NH(3) from urea (urease route): step 1/1. The polypeptide is Urease subunit beta (Staphylococcus aureus (strain Newman)).